Consider the following 272-residue polypeptide: Cell shape-determining protein MreC (272 aa).

At 1–8 (MNRFKKSK) the chain is on the cytoplasmic side. A helical transmembrane segment spans residues 9-29 (YVIIVFVTVLLVSALLATTYS). At 30-272 (STIVTKLGDG…VDVIELVGNS (243 aa)) the chain is on the extracellular side. Residues 64-112 (LTRTYNENESLKKQLYQLEVKSNEVESLKTENEQLRQLLDMKSKLQATK) adopt a coiled-coil conformation.

Belongs to the MreC family. In terms of assembly, homodimer. Interacts with a number of proteins in the elongasome, including PBP1a (pbpA), PBP1b, PBP2a, PBP2b (penA), StkP, MltG, MreD and RodZ.

It localises to the cell membrane. Involved in formation and maintenance of cell shape, probably part of the elongasome which synthesizes peripheral peptidoglycan (PG). This chain is Cell shape-determining protein MreC, found in Streptococcus pneumoniae (strain ATCC BAA-255 / R6).